Reading from the N-terminus, the 67-residue chain is Phycobilisome 7.8 kDa linker polypeptide, allophycocyanin-associated, core (67 aa).

The region spanning 1–56 (MRMFRITACVPSQTRIRTQRELQNTYFTKLVPYDNSFREQQRIMKMGGKIVKVELA) is the CpcD-like domain.

It belongs to the phycobilisome linker protein family.

The protein localises to the cellular thylakoid membrane. In terms of biological role, rod linker protein, associated with allophycocyanin. Linker polypeptides determine the state of aggregation and the location of the disk-shaped phycobiliprotein units within the phycobilisome and modulate their spectroscopic properties in order to mediate a directed and optimal energy transfer. This Synechocystis sp. (strain ATCC 27184 / PCC 6803 / Kazusa) protein is Phycobilisome 7.8 kDa linker polypeptide, allophycocyanin-associated, core (apcC).